A 293-amino-acid chain; its full sequence is Ribosomal protein L11 methyltransferase (293 aa).

S-adenosyl-L-methionine is bound by residues Thr-145, Gly-166, Asp-188, and Asn-230.

The protein belongs to the methyltransferase superfamily. PrmA family.

It localises to the cytoplasm. The enzyme catalyses L-lysyl-[protein] + 3 S-adenosyl-L-methionine = N(6),N(6),N(6)-trimethyl-L-lysyl-[protein] + 3 S-adenosyl-L-homocysteine + 3 H(+). In terms of biological role, methylates ribosomal protein L11. This Shewanella halifaxensis (strain HAW-EB4) protein is Ribosomal protein L11 methyltransferase.